Reading from the N-terminus, the 131-residue chain is Profilin (131 aa).

This sequence belongs to the profilin family. In terms of assembly, occurs in many kinds of cells as a complex with monomeric actin in a 1:1 ratio.

The protein resides in the cytoplasm. The protein localises to the cytoskeleton. In terms of biological role, binds to actin and affects the structure of the cytoskeleton. At high concentrations, profilin prevents the polymerization of actin, whereas it enhances it at low concentrations. By binding to PIP2, it inhibits the formation of IP3 and DG. The chain is Profilin from Fragaria ananassa (Strawberry).